A 353-amino-acid chain; its full sequence is Guanine nucleotide-binding protein subunit alpha (353 aa).

Gly2 carries the N-myristoyl glycine lipid modification. The S-palmitoyl cysteine moiety is linked to residue Cys3. Residues Asn33 to Leu353 enclose the G-alpha domain. A G1 motif region spans residues Lys36–Thr49. Glu44, Ser45, Gly46, Lys47, Ser48, Thr49, Asp150, Leu175, Thr181, Gly203, Asn269, Lys270, Asp272, and Ala325 together coordinate GTP. Residue Ser48 coordinates Mg(2+). The segment at Asp173 to Thr181 is G2 motif. A Mg(2+)-binding site is contributed by Thr181. A G3 motif region spans residues Tyr196–Arg205. The G4 motif stretch occupies residues Ile265–Asp272. The G5 motif stretch occupies residues Thr323 to Thr328.

Belongs to the G-alpha family. G(q) subfamily. G proteins are composed of 3 units; alpha, beta and gamma. The alpha chain contains the guanine nucleotide binding site. Requires Mg(2+) as cofactor.

In terms of biological role, guanine nucleotide-binding proteins (G proteins) are involved as modulators or transducers in various transmembrane signaling systems. The polypeptide is Guanine nucleotide-binding protein subunit alpha (CGP1) (Coprinellus congregatus (Inky cap fungus)).